Reading from the N-terminus, the 214-residue chain is Chaperone protein TorD (214 aa).

It belongs to the TorD/DmsD family. TorD subfamily.

It is found in the cytoplasm. Its function is as follows. Involved in the biogenesis of TorA. Acts on TorA before the insertion of the molybdenum cofactor and, as a result, probably favors a conformation of the apoenzyme that is competent for acquiring the cofactor. This Aeromonas salmonicida (strain A449) protein is Chaperone protein TorD.